Here is a 391-residue protein sequence, read N- to C-terminus: Aspartate aminotransferase (391 aa).

Positions 40 and 176 each coordinate L-aspartate. The residue at position 236 (K236) is an N6-(pyridoxal phosphate)lysine. R366 contributes to the L-aspartate binding site.

This sequence belongs to the class-I pyridoxal-phosphate-dependent aminotransferase family. In terms of assembly, homodimer. Pyridoxal 5'-phosphate is required as a cofactor.

It is found in the cytoplasm. The enzyme catalyses L-aspartate + 2-oxoglutarate = oxaloacetate + L-glutamate. The polypeptide is Aspartate aminotransferase (aspC) (Pyrococcus horikoshii (strain ATCC 700860 / DSM 12428 / JCM 9974 / NBRC 100139 / OT-3)).